We begin with the raw amino-acid sequence, 531 residues long: MRGRALVLVAALLLQLLLLAAAGGAGAAATERKAHNYEDALRKSLLYFEAQRSGRLPHNQRVAWRDHSGLTDGLEQGVDLVGGYYDAGDHVKFGLPMAFTVTMLSWSMIEYGDDVEAAGELGHALEAIKWGTDYFIKAHTKPNELWAEVGDGDTDHYCWQRPEDMTTSRQAYKVDRERPGSDVAGETAAAMAAASIVFRKSNPHYASLLLHHAQQLFEFADKYRGKYDSSIAEVKSYYASVSGYKDELLWAALWLHRATGKAHYLDYVVDNADCFGGTGWAITEFSWDVKYAGVQILAARLLLRGEHEERHRSTLEQYRAKAEHYVCGCLGRNADGGADANVERSPGGMLYVRQWNNMQYVTNAAFLLAAYADYLGDDADGAVSCAGGETAGAGEVAALARAQVDYVLGTNPRGISYLVGYGAKYPNRVHHRAASIVPYKHSKEFIGCTQGFDHWFGRRSSNPNVLVGAIVGGPDRRDRFRDNRENYMQTEACTYNTAPMVGMFAKLNRMARQEREQEEVAAPARSTAADV.

The first 27 residues, 1–27 (MRGRALVLVAALLLQLLLLAAAGGAGA), serve as a signal peptide directing secretion. Asp-89 functions as the Nucleophile in the catalytic mechanism. Active-site residues include His-430, Asp-482, and Glu-491.

This sequence belongs to the glycosyl hydrolase 9 (cellulase E) family. As to expression, ubiquitous.

It localises to the secreted. The enzyme catalyses Endohydrolysis of (1-&gt;4)-beta-D-glucosidic linkages in cellulose, lichenin and cereal beta-D-glucans.. In Oryza sativa subsp. japonica (Rice), this protein is Endoglucanase 7 (GLU10).